Reading from the N-terminus, the 289-residue chain is Mas-related G-protein coupled receptor member G (289 aa).

Residues 1-13 lie on the Extracellular side of the membrane; it reads MFGLFGLWRTFDS. A helical transmembrane segment spans residues 14 to 34; sequence VVFYLTLIVGLGGPVGNGLVL. Residues 35-42 lie on the Cytoplasmic side of the membrane; sequence WNLGFRIK. The chain crosses the membrane as a helical span at residues 43-63; sequence KGPFSIYLLHLAAADFLFLSC. The Extracellular segment spans residues 64 to 78; sequence RVGFSVAQAALGAQD. The helical transmembrane segment at 79 to 99 threads the bilayer; it reads TLYFVLTFLWFAVGLWLLAAF. Over 100–120 the chain is Cytoplasmic; that stretch reads SVERCLSDLFPACYQGCRPRH. Residues 121–141 traverse the membrane as a helical segment; it reads ASAVLCALVWTPTLPAVPLPA. Over 142 to 163 the chain is Extracellular; it reads NACGLLRNSACPLVCPRYHVAS. A helical transmembrane segment spans residues 164–184; sequence VTWFLVLARVAWTAGVVLFVW. At 185–195 the chain is on the cytoplasmic side; sequence VTCCSTRPRPR. Residues 196–216 traverse the membrane as a helical segment; that stretch reads LYGIVLGALLLLFFCGLPSVF. Residues 217 to 221 are Extracellular-facing; the sequence is YWSLQ. Residues 222–242 traverse the membrane as a helical segment; the sequence is PLLNFLLPVFSPLATLLACVN. Topologically, residues 243-289 are cytoplasmic; the sequence is SSSKPLIYSGLGRQPGKREPLRSVLRRALGEGAELGARGQSLPMGLL.

It belongs to the G-protein coupled receptor 1 family. Mas subfamily.

The protein localises to the cell membrane. Its function is as follows. Orphan receptor. May regulate nociceptor function and/or development, including the sensation or modulation of pain. The sequence is that of Mas-related G-protein coupled receptor member G (MRGPRG) from Homo sapiens (Human).